Here is a 366-residue protein sequence, read N- to C-terminus: tRNA 2-selenouridine synthase (366 aa).

One can recognise a Rhodanese domain in the interval 14–137 (LLENRPLIDV…IRSFLINTIE (124 aa)). Cys97 acts as the S-selanylcysteine intermediate in catalysis.

Belongs to the SelU family. In terms of assembly, monomer.

It carries out the reaction 5-methylaminomethyl-2-thiouridine(34) in tRNA + selenophosphate + (2E)-geranyl diphosphate + H2O + H(+) = 5-methylaminomethyl-2-selenouridine(34) in tRNA + (2E)-thiogeraniol + phosphate + diphosphate. The catalysed reaction is 5-methylaminomethyl-2-thiouridine(34) in tRNA + (2E)-geranyl diphosphate = 5-methylaminomethyl-S-(2E)-geranyl-thiouridine(34) in tRNA + diphosphate. It catalyses the reaction 5-methylaminomethyl-S-(2E)-geranyl-thiouridine(34) in tRNA + selenophosphate + H(+) = 5-methylaminomethyl-2-(Se-phospho)selenouridine(34) in tRNA + (2E)-thiogeraniol. The enzyme catalyses 5-methylaminomethyl-2-(Se-phospho)selenouridine(34) in tRNA + H2O = 5-methylaminomethyl-2-selenouridine(34) in tRNA + phosphate. Involved in the post-transcriptional modification of the uridine at the wobble position (U34) of tRNA(Lys), tRNA(Glu) and tRNA(Gln). Catalyzes the conversion of 2-thiouridine (S2U-RNA) to 2-selenouridine (Se2U-RNA). Acts in a two-step process involving geranylation of 2-thiouridine (S2U) to S-geranyl-2-thiouridine (geS2U) and subsequent selenation of the latter derivative to 2-selenouridine (Se2U) in the tRNA chain. The sequence is that of tRNA 2-selenouridine synthase from Shewanella frigidimarina (strain NCIMB 400).